The sequence spans 1131 residues: Inositol hexakisphosphate and diphosphoinositol-pentakisphosphate kinase 2 (1131 aa).

Residues Asp-21 to Pro-53 are disordered. The span at Asp-25–His-38 shows a compositional bias: basic and acidic residues. The segment covering Thr-39–Ser-52 has biased composition (acidic residues). Residue Lys-67 to Lys-68 coordinates substrate. Residues Arg-148, Lys-201, His-208, Arg-227, Glu-251–Met-254, and Asp-260–Lys-262 each bind ATP. Arg-227–Lys-228 provides a ligand contact to substrate. Positions 262 and 276 each coordinate substrate. ATP-binding positions include Ser-278, Asp-323, and Asp-335–Asn-337. Substrate is bound at residue Ser-340 to Lys-343. The segment at Pro-385–Val-456 is polyphosphoinositide-binding domain. The tract at residues Lys-912–Val-951 is disordered. Residues Glu-934–Val-951 show a composition bias toward basic and acidic residues.

It belongs to the histidine acid phosphatase family. VIP1 subfamily.

The protein resides in the cytoplasm. The protein localises to the cytosol. The catalysed reaction is 1D-myo-inositol hexakisphosphate + ATP = 1-diphospho-1D-myo-inositol 2,3,4,5,6-pentakisphosphate + ADP. It carries out the reaction 5-diphospho-1D-myo-inositol 1,2,3,4,6-pentakisphosphate + ATP + H(+) = 1,5-bis(diphospho)-1D-myo-inositol 2,3,4,6-tetrakisphosphate + ADP. Bifunctional inositol kinase that acts in concert with the IP6K kinases IP6K1, IP6K2 and IP6K3 to synthesize the diphosphate group-containing inositol pyrophosphates diphosphoinositol pentakisphosphate, PP-InsP5, and bis-diphosphoinositol tetrakisphosphate, (PP)2-InsP4. PP-InsP5 and (PP)2-InsP4, also respectively called InsP7 and InsP8, regulate a variety of cellular processes, including apoptosis, vesicle trafficking, cytoskeletal dynamics, exocytosis, insulin signaling and neutrophil activation. Phosphorylates inositol hexakisphosphate (InsP6) at position 1 to produce PP-InsP5 which is in turn phosphorylated by IP6Ks to produce (PP)2-InsP4. Alternatively, phosphorylates PP-InsP5 at position 1, produced by IP6Ks from InsP6, to produce (PP)2-InsP4. This is Inositol hexakisphosphate and diphosphoinositol-pentakisphosphate kinase 2 from Xenopus laevis (African clawed frog).